We begin with the raw amino-acid sequence, 433 residues long: 23S rRNA (uracil(1939)-C(5))-methyltransferase RlmD (433 aa).

The TRAM domain occupies 1–53; it reads MPVAVIESLDHEGRGVAHVDGKVVFVEGALAGEQVEYTVYRQRPSYDLAEATR. 4 residues coordinate [4Fe-4S] cluster: C66, C72, C75, and C154. The S-adenosyl-L-methionine site is built by Q263, F292, N297, E313, N341, and D362. The active-site Nucleophile is the C389.

Belongs to the class I-like SAM-binding methyltransferase superfamily. RNA M5U methyltransferase family. RlmD subfamily.

It carries out the reaction uridine(1939) in 23S rRNA + S-adenosyl-L-methionine = 5-methyluridine(1939) in 23S rRNA + S-adenosyl-L-homocysteine + H(+). Catalyzes the formation of 5-methyl-uridine at position 1939 (m5U1939) in 23S rRNA. In Aromatoleum aromaticum (strain DSM 19018 / LMG 30748 / EbN1) (Azoarcus sp. (strain EbN1)), this protein is 23S rRNA (uracil(1939)-C(5))-methyltransferase RlmD.